Here is a 78-residue protein sequence, read N- to C-terminus: Large ribosomal subunit protein bL28 (78 aa).

Residues 1 to 21 (MSRVCQVTGKKPMVGNNRSHA) form a disordered region.

Belongs to the bacterial ribosomal protein bL28 family.

The chain is Large ribosomal subunit protein bL28 from Shewanella baltica (strain OS223).